A 95-amino-acid chain; its full sequence is MRNYETLFILNPSLDEEATKAAIEKFKGVIEKEGGVVENVDEWGRRKLAYPINKVNEGYYTLINFKANPELPRELERVFRITDGVMRFMVVNPEK.

It belongs to the bacterial ribosomal protein bS6 family.

Its function is as follows. Binds together with bS18 to 16S ribosomal RNA. The protein is Small ribosomal subunit protein bS6 of Clostridium novyi (strain NT).